The chain runs to 959 residues: Vacuolar membrane protease (959 aa).

The Cytoplasmic portion of the chain corresponds to 1 to 13; that stretch reads MARLNPLSFTPGP. The chain crosses the membrane as a helical span at residues 14–34; that stretch reads VIFFTCAVYIALFAALLTVHL. At 35–378 the chain is on the vacuolar side; sequence RVPDYPSKTP…KVFVVFQLHT (344 aa). 3 N-linked (GlcNAc...) asparagine glycosylation sites follow: Asn48, Asn102, and Asn105. A disordered region spans residues 128–149; the sequence is GSEDDEPYHSPQSSPPGERRLD. Zn(2+) is bound by residues His158 and Asp170. Glu204 (proton acceptor) is an active-site residue. Residues Glu205, Glu230, and His303 each coordinate Zn(2+). Residues 379-399 traverse the membrane as a helical segment; it reads MFALCVTLLVVAPLFLIGLTF. The Cytoplasmic segment spans residues 400–432; that stretch reads GLSKADKNYLFARKAYMYSSDDDHPVHLYGWRG. A helical membrane pass occupies residues 433–453; sequence FFRFPIVFSIATAVVVGLAYL. Topologically, residues 454–463 are vacuolar; sequence MVRLNPLILY. Residues 464–484 form a helical membrane-spanning segment; it reads SSPYAVWSMMLSAWFSVAWFF. At 485–498 the chain is on the cytoplasmic side; sequence SRGASAMRPSALQR. The helical transmembrane segment at 499-519 threads the bilayer; sequence MYALIWLFAGSFALLAFVTVL. At 520 to 524 the chain is on the vacuolar side; sequence SNNYQ. The chain crosses the membrane as a helical span at residues 525–545; sequence VAGGYFALFYFAGIFLALVLS. The Cytoplasmic segment spans residues 546–645; it reads YLELFFAPTK…YPGEQDWSGK (100 aa). Disordered stretches follow at residues 566–594 and 606–635; these read DEPV…DATE and FARH…LKQP. A compositionally biased stretch (basic and acidic residues) spans 612 to 626; it reads RRDSIDDENGNRDEE. A helical transmembrane segment spans residues 646–666; that stretch reads LPGWLWLLQLLLVAPIVVILV. The Vacuolar segment spans residues 667-688; sequence GQIALLLTSALHQTPADGNSSL. Asn685 carries an N-linked (GlcNAc...) asparagine glycan. The chain crosses the membrane as a helical span at residues 689–709; it reads FVYLAFALLTTLLLAPIGPFI. The Cytoplasmic segment spans residues 710–716; sequence HRFTWHV. Residues 717-737 form a helical membrane-spanning segment; sequence PTFVFLVCVATVIYNLVAFPF. Over 738–959 the chain is Vacuolar; sequence SREHRLKVYF…LVEGFKYFQV (222 aa). N-linked (GlcNAc...) asparagine glycans are attached at residues Asn785, Asn818, Asn834, Asn864, and Asn899.

It belongs to the peptidase M28 family. Zn(2+) is required as a cofactor.

It localises to the vacuole membrane. In terms of biological role, may be involved in vacuolar sorting and osmoregulation. In Phaeosphaeria nodorum (strain SN15 / ATCC MYA-4574 / FGSC 10173) (Glume blotch fungus), this protein is Vacuolar membrane protease.